The primary structure comprises 358 residues: 3-dehydroquinate synthase (358 aa).

Residues 70-75, 104-108, 128-129, lysine 141, lysine 150, and 168-171 contribute to the NAD(+) site; these read DGEQYK, GVIGD, TT, and CLHT. Positions 183, 246, and 263 each coordinate Zn(2+).

It belongs to the sugar phosphate cyclases superfamily. Dehydroquinate synthase family. Co(2+) is required as a cofactor. The cofactor is Zn(2+). It depends on NAD(+) as a cofactor.

The protein resides in the cytoplasm. It carries out the reaction 7-phospho-2-dehydro-3-deoxy-D-arabino-heptonate = 3-dehydroquinate + phosphate. It participates in metabolic intermediate biosynthesis; chorismate biosynthesis; chorismate from D-erythrose 4-phosphate and phosphoenolpyruvate: step 2/7. Functionally, catalyzes the conversion of 3-deoxy-D-arabino-heptulosonate 7-phosphate (DAHP) to dehydroquinate (DHQ). This chain is 3-dehydroquinate synthase, found in Shewanella loihica (strain ATCC BAA-1088 / PV-4).